A 441-amino-acid polypeptide reads, in one-letter code: MAWKTEVNEVSDDIIDGLWSDDPPLQLESVTKIRRITSQRDISCVIRSGVVPRLVQLLKNQVFPKLQYEVAWALTNIAVDNPGVVVNNNAVPVLIQLIASPKDYVREQAIWTLSNVAGHSIHYRDFVLNSGVLMPLLRLLYKDTTLRIATWALRNLCRGKPHPAFDQVKPALPALEILLHSHDEDVLKNACMALCHLSEGSEDGIQSVIEAGFVPKLVQILQLPSPVVLVPALLTIGAMTAGNHQQTQCVINSGALPIISNMLTRNHENKIKKCACWVISNITAGTKEQIQSVIDANLIPILVNLAQDTDFYMKKEAVWAISNMALNGSHDQIKYMAEQSCIKQLCDILVYSDERTTILKCLDGLENMLKAGEAEKNSEDVNPYCLLIEDAEGLEKISKLQMNKNDDIYEKAYKILVTNWFEEDDENNNNNVRCDDVDFQV.

8 ARM repeats span residues 39–79, 80–118, 121–158, 160–199, 202–241, 244–284, 287–326, and 330–370; these read QRDI…NIAV, DNPG…NVAG, IHYR…NLCR, KPHP…HLSE, EDGI…AMTA, HQQT…NITA, KEQI…NMAL, and HDQI…NMLK.

The protein belongs to the importin alpha family. Forms a complex with importin subunit beta-1.

It is found in the nucleus envelope. Binds to conventional NLS motifs and mediates nuclear protein import across the nuclear envelope. This Arabidopsis thaliana (Mouse-ear cress) protein is Importin subunit alpha-8.